Reading from the N-terminus, the 60-residue chain is UPF0337 protein asr4653 (60 aa).

The protein belongs to the UPF0337 (CsbD) family.

This chain is UPF0337 protein asr4653, found in Nostoc sp. (strain PCC 7120 / SAG 25.82 / UTEX 2576).